Here is a 135-residue protein sequence, read N- to C-terminus: ATP synthase epsilon chain (135 aa).

The protein belongs to the ATPase epsilon chain family. F-type ATPases have 2 components, CF(1) - the catalytic core - and CF(0) - the membrane proton channel. CF(1) has five subunits: alpha(3), beta(3), gamma(1), delta(1), epsilon(1). CF(0) has three main subunits: a, b and c.

It is found in the cell inner membrane. Its function is as follows. Produces ATP from ADP in the presence of a proton gradient across the membrane. This is ATP synthase epsilon chain from Rhizobium etli (strain ATCC 51251 / DSM 11541 / JCM 21823 / NBRC 15573 / CFN 42).